Consider the following 513-residue polypeptide: Aromatic amino acid aminotransferase 2 (513 aa).

2 positions are modified to phosphoserine: Ser90 and Ser92. Pyridoxal 5'-phosphate contacts are provided by residues Tyr102, 143 to 144 (SN), Asn232, Tyr263, and 314 to 316 (TFS). Asn232 provides a ligand contact to substrate. Residue Lys317 is modified to N6-(pyridoxal phosphate)lysine. Arg324 is a pyridoxal 5'-phosphate binding site. Substrate is bound at residue Arg481.

This sequence belongs to the class-I pyridoxal-phosphate-dependent aminotransferase family. Pyridoxal 5'-phosphate serves as cofactor.

It localises to the cytoplasm. The enzyme catalyses an aromatic L-alpha-amino acid + 2-oxoglutarate = an aromatic oxo-acid + L-glutamate. It carries out the reaction an aromatic L-alpha-amino acid + 4-methylsulfanyl-2-oxobutanoate = an aromatic oxo-acid + L-methionine. It catalyses the reaction L-kynurenine + 2-oxoglutarate = kynurenate + L-glutamate + H2O. It participates in amino-acid biosynthesis; L-methionine biosynthesis via salvage pathway; L-methionine from S-methyl-5-thio-alpha-D-ribose 1-phosphate: step 6/6. It functions in the pathway amino-acid degradation; L-kynurenine degradation; kynurenate from L-kynurenine: step 1/2. Its function is as follows. General aromatic amino acid transaminase involved in several otherwise unrelated metabolic pathways. Mainly involved in tryptophan degradation. Active with phenylalanine, tyrosine and tryptophan as amino donors and with phenylpyruvate, hydroxyphenylpyruvate and pyruvate as amino acceptors. Does not accept glutamate or 2-oxoglutarate as substrates. Also active with methionine, leucine, glutamine and kynurenine. Catalyzes the formation of methionine from 2-keto-4-methylthiobutyrate (KMTB) in the methionine salvage pathway primarily using aromatic amino acids (tyrosine, phenylalanine and tryptophan) as the amino donors. Catalyzes the irreversible transamination of the L-tryptophan metabolite L-kynurenine to form kynurenic acid (KA) with pyruvate as amino acceptor. In Saccharomyces cerevisiae (strain ATCC 204508 / S288c) (Baker's yeast), this protein is Aromatic amino acid aminotransferase 2.